Consider the following 274-residue polypeptide: Leucine-rich repeat-containing protein 10 (274 aa).

LRR repeat units lie at residues 30 to 51, 52 to 74, 76 to 97, 98 to 120, 121 to 143, 145 to 166, 167 to 189, and 191 to 213; these read LDRM…VCSF, TELV…LAQL, NLQI…VCTL, KQLC…LSLL, QNLR…VCEL, LLKT…LRRL, RELR…LLRM, and FLEV…HLTN. The disordered stretch occupies residues 236-274; that stretch reads RVGRWAEETPEPDPRKARRYALAKEENQEPPPPLLPSSS. Residues 239–250 are compositionally biased toward basic and acidic residues; sequence RWAEETPEPDPR. Positions 264–274 are enriched in pro residues; sequence EPPPPLLPSSS.

As to expression, detected specifically in the heart.

The protein localises to the nucleus. Functionally, may play important roles in cardiac development and/or cardiac function. This is Leucine-rich repeat-containing protein 10 (Lrrc10) from Mus musculus (Mouse).